Consider the following 313-residue polypeptide: Carbamate kinase (313 aa).

Belongs to the carbamate kinase family.

The protein resides in the cytoplasm. It carries out the reaction hydrogencarbonate + NH4(+) + ATP = carbamoyl phosphate + ADP + H2O + H(+). The protein operates within metabolic intermediate metabolism; carbamoyl phosphate degradation; CO(2) and NH(3) from carbamoyl phosphate: step 1/1. The sequence is that of Carbamate kinase (arcC) from Oenococcus oeni (Leuconostoc oenos).